A 384-amino-acid chain; its full sequence is Aurora kinase (384 aa).

2 stretches are compositionally biased toward polar residues: residues 1 to 12 (MSYPNNKENSNN) and 19 to 29 (SVPSKQPQRVL). The segment at 1 to 100 (MSYPNNKENS…SSSSSSSQSV (100 aa)) is disordered. Low complexity predominate over residues 30-99 (QQQNTNINNH…SSSSSSSSQS (70 aa)). The 251-residue stretch at 110–360 (FDIGKLLGMG…LKDVINHPWI (251 aa)) folds into the Protein kinase domain. ATP-binding positions include 116-124 (LGMGRFGHV) and Lys-139. The active-site Proton acceptor is Asp-233.

The protein belongs to the protein kinase superfamily. Ser/Thr protein kinase family. Aurora subfamily. Interacts with icpA. Forms a complex at the central spindle.

It localises to the cytoplasm. Its subcellular location is the chromosome. The protein resides in the centromere. The protein localises to the cytoskeleton. It is found in the spindle pole. It localises to the cleavage furrow. Its subcellular location is the cell projection. The protein resides in the neuron projection. It carries out the reaction L-seryl-[protein] + ATP = O-phospho-L-seryl-[protein] + ADP + H(+). It catalyses the reaction L-threonyl-[protein] + ATP = O-phospho-L-threonyl-[protein] + ADP + H(+). Its function is as follows. Part of a chromosomal passenger complex. In Dictyostelium discoideum (Social amoeba), this protein is Aurora kinase (aurK).